The primary structure comprises 292 residues: Outer membrane protein assembly factor BamD (292 aa).

Positions 1 to 26 (MIQRPTFFTPTHLLAMLLATFVLITG) are cleaved as a signal peptide. Residue Cys27 is the site of N-palmitoyl cysteine attachment. Cys27 carries S-diacylglycerol cysteine lipidation.

Belongs to the BamD family. As to quaternary structure, part of the Bam complex.

It is found in the cell outer membrane. Functionally, part of the outer membrane protein assembly complex, which is involved in assembly and insertion of beta-barrel proteins into the outer membrane. The sequence is that of Outer membrane protein assembly factor BamD from Xylella fastidiosa (strain 9a5c).